The primary structure comprises 508 residues: Probable malate:quinone oxidoreductase (508 aa).

The protein belongs to the MQO family. Requires FAD as cofactor.

The enzyme catalyses (S)-malate + a quinone = a quinol + oxaloacetate. It participates in carbohydrate metabolism; tricarboxylic acid cycle; oxaloacetate from (S)-malate (quinone route): step 1/1. In Chromohalobacter salexigens (strain ATCC BAA-138 / DSM 3043 / CIP 106854 / NCIMB 13768 / 1H11), this protein is Probable malate:quinone oxidoreductase.